The chain runs to 268 residues: Tetratricopeptide repeat protein 33 (268 aa).

A disordered region spans residues 14–34 (VSKQTVQQFEQDSEQADEDEV). Positions 24-34 (QDSEQADEDEV) are enriched in acidic residues. 3 TPR repeats span residues 60–93 (SKRLKEEGALLAEQDRNWEALKKWDEAVQLTPED), 94–127 (AVLYEMKSQVLITLGEVFLAVQSAEMATRLRPIW), and 128–161 (WEAWQTLGRAQLSLGEVELAVRSFQVALHLHPSE). Residues 249–268 (EGDDNPTSSSQSVLIKARGL) are disordered.

The chain is Tetratricopeptide repeat protein 33 (ttc33) from Danio rerio (Zebrafish).